The sequence spans 58 residues: Keratin-associated protein 19-9b (58 aa).

Positions 6–52 are 12 X 2 AA repeats of G-[YCGS]; that stretch reads GNYYGGLGYGLGGFGGFGGLGYGYGSSYGLGGYGGYGYFSPSFYGGY.

It belongs to the KRTAP type 19 family. Interacts with hair keratins.

In terms of biological role, in the hair cortex, hair keratin intermediate filaments are embedded in an interfilamentous matrix, consisting of hair keratin-associated proteins (KRTAP), which are essential for the formation of a rigid and resistant hair shaft through their extensive disulfide bond cross-linking with abundant cysteine residues of hair keratins. The matrix proteins include the high-sulfur and high-glycine-tyrosine keratins. This Mus musculus (Mouse) protein is Keratin-associated protein 19-9b (Krtap19-9b).